A 110-amino-acid chain; its full sequence is Hydrogenase maturation factor HypA (110 aa).

His-2 contacts Ni(2+). Positions 70, 73, 86, and 89 each coordinate Zn(2+).

It belongs to the HypA/HybF family.

In terms of biological role, involved in the maturation of [NiFe] hydrogenases. Required for nickel insertion into the metal center of the hydrogenase. This chain is Hydrogenase maturation factor HypA, found in Geobacter sulfurreducens (strain ATCC 51573 / DSM 12127 / PCA).